A 493-amino-acid chain; its full sequence is Glutamyl-tRNA(Gln) amidotransferase subunit A (493 aa).

Catalysis depends on charge relay system residues Lys79 and Ser159. Ser183 serves as the catalytic Acyl-ester intermediate.

The protein belongs to the amidase family. GatA subfamily. Heterotrimer of A, B and C subunits.

It catalyses the reaction L-glutamyl-tRNA(Gln) + L-glutamine + ATP + H2O = L-glutaminyl-tRNA(Gln) + L-glutamate + ADP + phosphate + H(+). Its function is as follows. Allows the formation of correctly charged Gln-tRNA(Gln) through the transamidation of misacylated Glu-tRNA(Gln) in organisms which lack glutaminyl-tRNA synthetase. The reaction takes place in the presence of glutamine and ATP through an activated gamma-phospho-Glu-tRNA(Gln). In Brucella suis (strain ATCC 23445 / NCTC 10510), this protein is Glutamyl-tRNA(Gln) amidotransferase subunit A.